A 376-amino-acid chain; its full sequence is Palmitoyl-[acyl-carrier-protein] 4-desaturase 2, chloroplastic (376 aa).

The transit peptide at 1 to 33 (MELHLALRASPLPAADPGRRPPPPRGNFATNCT) directs the protein to the chloroplast. Residues Glu-114, Glu-149, His-152, Glu-202, Glu-235, and His-238 each coordinate Fe cation.

It belongs to the fatty acid desaturase type 2 family. In terms of assembly, homodimer. Fe(2+) serves as cofactor. Preferentially expressed in the flower labellum.

The protein resides in the plastid. It is found in the chloroplast stroma. The enzyme catalyses hexadecanoyl-[ACP] + 2 reduced [2Fe-2S]-[ferredoxin] + O2 + 2 H(+) = (4Z)-hexadecenoyl-[ACP] + 2 oxidized [2Fe-2S]-[ferredoxin] + 2 H2O. It catalyses the reaction octadecanoyl-[ACP] + 2 reduced [2Fe-2S]-[ferredoxin] + O2 + 2 H(+) = (9Z)-octadecenoyl-[ACP] + 2 oxidized [2Fe-2S]-[ferredoxin] + 2 H2O. It participates in lipid metabolism; fatty acid metabolism. In terms of biological role, converts stearoyl-ACP to oleoyl-ACP by introduction of a cis double bond between carbons 9 and 10 of the acyl chain. Converts palmitoyl-ACP to (4Z)-hexadec-4-enoyl-ACP by introduction of a cis double bond between carbons 4 and 5 of the acyl chain. Catalyzes the desaturation of saturated fatty acid 18:0 and 16:0 to generate 18:1 (delta-9) and 16:1 (delta-4) intermediates, expected to give rise to 9-alkenes and 12-alkenes, respectively. In Ophrys sphegodes (Early spider orchid), this protein is Palmitoyl-[acyl-carrier-protein] 4-desaturase 2, chloroplastic (SAD2).